A 2289-amino-acid chain; its full sequence is Protein Ycf2 (2289 aa).

Residue 1643-1650 (GSIGTGRS) participates in ATP binding.

It belongs to the Ycf2 family.

It localises to the plastid. The protein localises to the chloroplast stroma. In terms of biological role, probable ATPase of unknown function. Its presence in a non-photosynthetic plant (Epifagus virginiana) and experiments in tobacco indicate that it has an essential function which is probably not related to photosynthesis. The polypeptide is Protein Ycf2 (Aethionema grandiflorum (Persian stone-cress)).